Reading from the N-terminus, the 267-residue chain is Cilia- and flagella-associated protein 300 (267 aa).

Belongs to the CFAP300 family. Interacts with DNAAF2.

It is found in the cytoplasm. It localises to the cytoskeleton. The protein localises to the cilium axoneme. Functionally, cilium- and flagellum-specific protein that plays a role in axonemal structure organization and motility. May play a role in outer and inner dynein arm assembly. The sequence is that of Cilia- and flagella-associated protein 300 from Bos taurus (Bovine).